Here is a 290-residue protein sequence, read N- to C-terminus: uncharacterized protein (290 aa).

The interval 67 to 210 (LPAAPEAPGD…QPSPKNPTKS (144 aa)) is disordered. Positions 121–130 (RPQETQEGHR) are enriched in basic and acidic residues. Residues 181–190 (AAQAAAAATA) show a composition bias toward low complexity. A compositionally biased stretch (polar residues) spans 191 to 200 (NPGSQTQTPL).

This is an uncharacterized protein from Homo sapiens (Human).